A 396-amino-acid chain; its full sequence is S-adenosylmethionine synthase (396 aa).

Position 14 (His14) interacts with ATP. A Mg(2+)-binding site is contributed by Asp16. A K(+)-binding site is contributed by Glu42. Glu55 and Gln98 together coordinate L-methionine. Positions Gln98 to Gly108 are flexible loop. ATP-binding positions include Asp167–Lys169, Arg234–Phe235, Asp243, Arg249–Lys250, Ser266, and Lys270. Residue Asp243 participates in L-methionine binding. Position 274 (Lys274) interacts with L-methionine.

It belongs to the AdoMet synthase family. As to quaternary structure, homotetramer; dimer of dimers. Requires Mg(2+) as cofactor. It depends on K(+) as a cofactor.

The protein localises to the cytoplasm. The enzyme catalyses L-methionine + ATP + H2O = S-adenosyl-L-methionine + phosphate + diphosphate. Its pathway is amino-acid biosynthesis; S-adenosyl-L-methionine biosynthesis; S-adenosyl-L-methionine from L-methionine: step 1/1. Functionally, catalyzes the formation of S-adenosylmethionine (AdoMet) from methionine and ATP. The overall synthetic reaction is composed of two sequential steps, AdoMet formation and the subsequent tripolyphosphate hydrolysis which occurs prior to release of AdoMet from the enzyme. The polypeptide is S-adenosylmethionine synthase (Treponema pallidum (strain Nichols)).